The following is a 331-amino-acid chain: Glyceraldehyde-3-phosphate dehydrogenase, cytosolic (331 aa).

Residues 12-13 (RI), Asp-34, and Arg-78 each bind NAD(+). Residues 149-151 (SCT), Thr-180, 209-210 (TG), and Arg-232 contribute to the D-glyceraldehyde 3-phosphate site. The active-site Nucleophile is Cys-150. Asn-314 contacts NAD(+).

It belongs to the glyceraldehyde-3-phosphate dehydrogenase family. In terms of assembly, homotetramer.

The protein localises to the cytoplasm. The enzyme catalyses D-glyceraldehyde 3-phosphate + phosphate + NAD(+) = (2R)-3-phospho-glyceroyl phosphate + NADH + H(+). The protein operates within carbohydrate degradation; glycolysis; pyruvate from D-glyceraldehyde 3-phosphate: step 1/5. The sequence is that of Glyceraldehyde-3-phosphate dehydrogenase, cytosolic from Trypanosoma brucei brucei.